Reading from the N-terminus, the 125-residue chain is Small ribosomal subunit protein uS13 (125 aa).

The tract at residues 97-125 is disordered; that stretch reads PVRGQKTRSNARTRKGPRPSRIKTKKKSS. The span at 101 to 125 shows a compositional bias: basic residues; the sequence is QKTRSNARTRKGPRPSRIKTKKKSS.

Belongs to the universal ribosomal protein uS13 family. As to quaternary structure, part of the 30S ribosomal subunit. Forms a loose heterodimer with protein S19. Forms two bridges to the 50S subunit in the 70S ribosome.

Located at the top of the head of the 30S subunit, it contacts several helices of the 16S rRNA. In the 70S ribosome it contacts the 23S rRNA (bridge B1a) and protein L5 of the 50S subunit (bridge B1b), connecting the 2 subunits; these bridges are implicated in subunit movement. Contacts the tRNAs in the A and P-sites. The sequence is that of Small ribosomal subunit protein uS13 from Thermotoga neapolitana (strain ATCC 49049 / DSM 4359 / NBRC 107923 / NS-E).